A 133-amino-acid chain; its full sequence is MSRDFSREKRLLTPRHFKAVFDSPTGKVPGKNLLLLARNNDLDHPRLGLVIGKKSVKLSVERNRLKRLMRESFRQHQDSLVGWDIVIVARKGLGDVENPELIQHFGKLWKRLARSRPTPEEKSEPAGVDSTDA.

The interval 114-133 is disordered; it reads RSRPTPEEKSEPAGVDSTDA.

The protein belongs to the RnpA family. Consists of a catalytic RNA component (M1 or rnpB) and a protein subunit.

The enzyme catalyses Endonucleolytic cleavage of RNA, removing 5'-extranucleotides from tRNA precursor.. Its function is as follows. RNaseP catalyzes the removal of the 5'-leader sequence from pre-tRNA to produce the mature 5'-terminus. It can also cleave other RNA substrates such as 4.5S RNA. The protein component plays an auxiliary but essential role in vivo by binding to the 5'-leader sequence and broadening the substrate specificity of the ribozyme. This Pseudomonas syringae pv. tomato (strain ATCC BAA-871 / DC3000) protein is Ribonuclease P protein component.